A 497-amino-acid chain; its full sequence is Cytochrome P450 26A1 (497 aa).

Cysteine 442 contacts heme.

It belongs to the cytochrome P450 family. It depends on heme as a cofactor. Expressed in most fetal and adult tissues with highest levels in adult liver, heart, pituitary gland, adrenal gland, placenta and regions of the brain. Expressed at high levels in lung, pancreas, skin and uterus (at protein level). Lower expression level is detected in spleen, kidney, intestine and adipose tissue (at protein level).

It is found in the endoplasmic reticulum membrane. The protein localises to the microsome membrane. It catalyses the reaction all-trans-retinoate + reduced [NADPH--hemoprotein reductase] + O2 = all-trans-(4S)-hydroxyretinoate + oxidized [NADPH--hemoprotein reductase] + H2O + H(+). The catalysed reaction is all-trans-(4S)-hydroxyretinoate + reduced [NADPH--hemoprotein reductase] + O2 = all-trans-(4S,16)-dihydroxyretinoate + oxidized [NADPH--hemoprotein reductase] + H2O + H(+). It carries out the reaction all-trans-retinoate + reduced [NADPH--hemoprotein reductase] + O2 = all-trans-18-hydroxyretinoate + oxidized [NADPH--hemoprotein reductase] + H2O + H(+). Its function is as follows. A cytochrome P450 monooxygenase involved in the metabolism of retinoates (RAs), the active metabolites of vitamin A, and critical signaling molecules in animals. RAs exist as at least four different isomers: all-trans-RA (atRA), 9-cis-RA, 13-cis-RA, and 9,13-dicis-RA, where atRA is considered to be the biologically active isomer, although 9-cis-RA and 13-cis-RA also have activity. Catalyzes the hydroxylation of atRA primarily at C-4 and C-18, thereby contributing to the regulation of atRA homeostasis and signaling. Hydroxylation of atRA limits its biological activity and initiates a degradative process leading to its eventual elimination. Involved in the convertion of atRA to all-trans-4-oxo-RA. Able to metabolize other RAs such as 9-cis, 13-cis and 9,13-di-cis RA. Can oxidize all-trans-13,14-dihydroretinoate (DRA) to metabolites which could include all-trans-4-oxo-DRA, all-trans-4-hydroxy-DRA, all-trans-5,8-epoxy-DRA, and all-trans-18-hydroxy-DRA. May play a role in the oxidative metabolism of xenobiotics such as tazarotenic acid. The sequence is that of Cytochrome P450 26A1 from Homo sapiens (Human).